The chain runs to 259 residues: Proteasome subunit alpha (259 aa).

The protein belongs to the peptidase T1A family. The 20S proteasome core is composed of 14 alpha and 14 beta subunits that assemble into four stacked heptameric rings, resulting in a barrel-shaped structure. The two inner rings, each composed of seven catalytic beta subunits, are sandwiched by two outer rings, each composed of seven alpha subunits. The catalytic chamber with the active sites is on the inside of the barrel. Has a gated structure, the ends of the cylinder being occluded by the N-termini of the alpha-subunits. Is capped at one or both ends by the proteasome regulatory ATPase, PAN.

The protein resides in the cytoplasm. With respect to regulation, the formation of the proteasomal ATPase PAN-20S proteasome complex, via the docking of the C-termini of PAN into the intersubunit pockets in the alpha-rings, triggers opening of the gate for substrate entry. Interconversion between the open-gate and close-gate conformations leads to a dynamic regulation of the 20S proteasome proteolysis activity. In terms of biological role, component of the proteasome core, a large protease complex with broad specificity involved in protein degradation. This is Proteasome subunit alpha from Methanococcus maripaludis (strain DSM 14266 / JCM 13030 / NBRC 101832 / S2 / LL).